Reading from the N-terminus, the 921-residue chain is Isoleucine--tRNA ligase (921 aa).

The 'HIGH' region motif lies at 57–67 (PYANGDIHMGH). Position 553 (Glu553) interacts with L-isoleucyl-5'-AMP. Residues 594–598 (KMSKS) carry the 'KMSKS' region motif. Lys597 is a binding site for ATP.

The protein belongs to the class-I aminoacyl-tRNA synthetase family. IleS type 1 subfamily. As to quaternary structure, monomer.

The protein localises to the cytoplasm. It catalyses the reaction tRNA(Ile) + L-isoleucine + ATP = L-isoleucyl-tRNA(Ile) + AMP + diphosphate. Catalyzes the attachment of isoleucine to tRNA(Ile). As IleRS can inadvertently accommodate and process structurally similar amino acids such as valine, to avoid such errors it has two additional distinct tRNA(Ile)-dependent editing activities. One activity is designated as 'pretransfer' editing and involves the hydrolysis of activated Val-AMP. The other activity is designated 'posttransfer' editing and involves deacylation of mischarged Val-tRNA(Ile). The chain is Isoleucine--tRNA ligase from Bacillus subtilis (strain 168).